We begin with the raw amino-acid sequence, 167 residues long: MAPVCVLVGAPGSGKTTVGRALAELLGVEFRDTDLDIEATVGKPISEIFIDEGEAHFRTLERAAVATALATTAGVLALGGGAVLAEETRSALVGHTVVHLSVELPDAVRRVGLGAGRPLLAVNPRATLKYLLEQRRPHYAAVATATVVTDGRTPEQLAVEVAALLPS.

Glycine 12–threonine 17 is an ATP binding site. Mg(2+) is bound at residue threonine 16. Residues aspartate 34, arginine 58, and glycine 80 each contribute to the substrate site. Residue arginine 117 coordinates ATP. Residue arginine 135 participates in substrate binding. Residue arginine 152 participates in ATP binding.

It belongs to the shikimate kinase family. As to quaternary structure, monomer. Requires Mg(2+) as cofactor.

It localises to the cytoplasm. The catalysed reaction is shikimate + ATP = 3-phosphoshikimate + ADP + H(+). It participates in metabolic intermediate biosynthesis; chorismate biosynthesis; chorismate from D-erythrose 4-phosphate and phosphoenolpyruvate: step 5/7. Functionally, catalyzes the specific phosphorylation of the 3-hydroxyl group of shikimic acid using ATP as a cosubstrate. The sequence is that of Shikimate kinase from Salinispora tropica (strain ATCC BAA-916 / DSM 44818 / JCM 13857 / NBRC 105044 / CNB-440).